A 139-amino-acid chain; its full sequence is uncharacterized protein (139 aa).

This is an uncharacterized protein from Halalkalibacterium halodurans (strain ATCC BAA-125 / DSM 18197 / FERM 7344 / JCM 9153 / C-125) (Bacillus halodurans).